Here is a 216-residue protein sequence, read N- to C-terminus: Lipoprotein-releasing system ATP-binding protein LolD (216 aa).

The region spanning 2 to 216 (IHLEGITKSF…TIHMVDGNII (215 aa)) is the ABC transporter domain. Residue 34–41 (GPSGAGKT) coordinates ATP.

It belongs to the ABC transporter superfamily. Lipoprotein translocase (TC 3.A.1.125) family. In terms of assembly, the complex is composed of two ATP-binding proteins (LolD) and two transmembrane proteins (LolC and LolE).

The protein resides in the cell inner membrane. Functionally, part of the ABC transporter complex LolCDE involved in the translocation of mature outer membrane-directed lipoproteins, from the inner membrane to the periplasmic chaperone, LolA. Responsible for the formation of the LolA-lipoprotein complex in an ATP-dependent manner. This chain is Lipoprotein-releasing system ATP-binding protein LolD, found in Bacteroides fragilis (strain YCH46).